A 260-amino-acid polypeptide reads, in one-letter code: tRNA (guanine-N(1)-)-methyltransferase (260 aa).

Residues glycine 117 and 137 to 142 (LGDFVL) each bind S-adenosyl-L-methionine.

Belongs to the RNA methyltransferase TrmD family. As to quaternary structure, homodimer.

The protein localises to the cytoplasm. The catalysed reaction is guanosine(37) in tRNA + S-adenosyl-L-methionine = N(1)-methylguanosine(37) in tRNA + S-adenosyl-L-homocysteine + H(+). Functionally, specifically methylates guanosine-37 in various tRNAs. The sequence is that of tRNA (guanine-N(1)-)-methyltransferase from Cupriavidus metallidurans (strain ATCC 43123 / DSM 2839 / NBRC 102507 / CH34) (Ralstonia metallidurans).